The primary structure comprises 197 residues: MMFPQSSSRHSGSSHMPQQLKFTTSDSCDRIKDEFQLLQAQYHSLKLECDKLAGEKSEMQRHYVMYYEMSYGLNIEMHKQAEIVKRLHGICAQVLPYLSQEHQQQVLGAIERAKQVTAPELNSIIRQLQVHQLSQLQALALPLTSLPMGLQAPSLPISASSGLLSLSALGSQGHLPKEDKNGHEGDRRPDDDGDKSD.

Residues methionine 1–histidine 15 are compositionally biased toward low complexity. Disordered stretches follow at residues methionine 1 to leucine 20 and leucine 169 to aspartate 197. Residues leucine 166–aspartate 197 are CCN domain. Residues leucine 175–aspartate 197 show a composition bias toward basic and acidic residues.

This sequence belongs to the WD repeat Groucho/TLE family. As to quaternary structure, monomer. In terms of processing, ubiquitinated by XIAP/BIRC4. Predominantly expressed in brain, testis and ovary. Ubiquitously expressed in the developing embryo. Present in unfertilized and fertilized eggs.

Its subcellular location is the nucleus. Its function is as follows. May act as a transcriptional corepressor. Has a possible role in the negative regulation of proteins containing WD-40 repeats. May be required for the initiation and maintenance of the differentiated state. The protein is Amino-terminal enhancer of split (aes) of Xenopus laevis (African clawed frog).